The following is a 222-amino-acid chain: 7-cyano-7-deazaguanine synthase (222 aa).

An ATP-binding site is contributed by 11–21 (FSGGQDSTTCL). Zn(2+) is bound by residues Cys-187, Cys-195, Cys-198, and Cys-201.

This sequence belongs to the QueC family. The cofactor is Zn(2+).

It carries out the reaction 7-carboxy-7-deazaguanine + NH4(+) + ATP = 7-cyano-7-deazaguanine + ADP + phosphate + H2O + H(+). The protein operates within purine metabolism; 7-cyano-7-deazaguanine biosynthesis. Catalyzes the ATP-dependent conversion of 7-carboxy-7-deazaguanine (CDG) to 7-cyano-7-deazaguanine (preQ(0)). In Actinobacillus pleuropneumoniae serotype 5b (strain L20), this protein is 7-cyano-7-deazaguanine synthase.